Here is a 378-residue protein sequence, read N- to C-terminus: Erythronate-4-phosphate dehydrogenase (378 aa).

Positions 45 and 66 each coordinate substrate. D146 and T175 together coordinate NAD(+). Residue R208 is part of the active site. D232 is a binding site for NAD(+). E237 is an active-site residue. H254 serves as the catalytic Proton donor. G257 is an NAD(+) binding site. Y258 provides a ligand contact to substrate.

The protein belongs to the D-isomer specific 2-hydroxyacid dehydrogenase family. PdxB subfamily. As to quaternary structure, homodimer.

It is found in the cytoplasm. The enzyme catalyses 4-phospho-D-erythronate + NAD(+) = (R)-3-hydroxy-2-oxo-4-phosphooxybutanoate + NADH + H(+). The protein operates within cofactor biosynthesis; pyridoxine 5'-phosphate biosynthesis; pyridoxine 5'-phosphate from D-erythrose 4-phosphate: step 2/5. Functionally, catalyzes the oxidation of erythronate-4-phosphate to 3-hydroxy-2-oxo-4-phosphonooxybutanoate. This is Erythronate-4-phosphate dehydrogenase from Escherichia coli (strain K12 / MC4100 / BW2952).